Reading from the N-terminus, the 164-residue chain is Class I hydrophobin rodA (164 aa).

The N-terminal stretch at 1-18 is a signal peptide; the sequence is MRFSISALVLGLAATVYA. N-linked (GlcNAc...) asparagine glycosylation occurs at N50. Intrachain disulfides connect C60/C138, C68/C132, C69/C109, and C139/C157.

This sequence belongs to the fungal hydrophobin family. Self-assembles to form functional amyloid fibrils called rodlets. Self-assembly into fibrillar rodlets occurs spontaneously at hydrophobic:hydrophilic interfaces and the rodlets further associate laterally to form amphipathic monolayers.

It localises to the secreted. The protein resides in the cell wall. Functionally, aerial growth, conidiation, and dispersal of filamentous fungi in the environment rely upon a capability of their secreting small amphipathic proteins called hydrophobins (HPBs) with low sequence identity. Class I can self-assemble into an outermost layer of rodlet bundles on aerial cell surfaces, conferring cellular hydrophobicity that supports fungal growth, development and dispersal; whereas Class II form highly ordered films at water-air interfaces through intermolecular interactions but contribute nothing to the rodlet structure. RodA is a class I hydrophobin involved in the cell surface hydrophobicity and conidiation under aerial conditions. The surface rodlet layer of the conidial cell wall makes airborne conidia of filamentous fungi inert to both innate and adaptive immunity. This chain is Class I hydrophobin rodA, found in Penicillium camembertii.